We begin with the raw amino-acid sequence, 111 residues long: Resistin-like alpha (111 aa).

Positions 1-23 (MKTATCSLLICVFLLQLMVPVNT) are cleaved as a signal peptide. Cystine bridges form between cysteine 55–cysteine 108, cysteine 67–cysteine 107, cysteine 76–cysteine 93, cysteine 78–cysteine 95, and cysteine 82–cysteine 97.

Belongs to the resistin/FIZZ family. Monomer. In terms of tissue distribution, highest levels in adipose tissue.

The protein resides in the secreted. In terms of biological role, probable hormone. Plays a role in pulmonary vascular remodeling. In Rattus norvegicus (Rat), this protein is Resistin-like alpha (Retnla).